Reading from the N-terminus, the 303-residue chain is Inner kinetochore subunit mal2 (303 aa).

This sequence belongs to the CENP-O/MCM21 family. Component of the heterotetrameric kinetochore subcomplex COMA, which consists of fta2, fta7, mal2 and mis17. The COMA subcomplex is part of a larger constitutive centromere-associated network (CCAN) (also known as central kinetochore Sim4 complex in fission yeast), which is composed of at least cnl2, cnp3, cnp20, fta1, fta2, fta3, fta4, fta6, fta7, mal2, mhf1, mhf2, mis6, mis15, mis17, sim4 and wip1.

The protein localises to the nucleus. It localises to the chromosome. Its subcellular location is the centromere. The protein resides in the kinetochore. In terms of biological role, component of the kinetochore, a multiprotein complex that assembles on centromeric DNA and attaches chromosomes to spindle microtubules, mediating chromosome segregation and sister chromatid segregation during meiosis and mitosis. Component of the inner kinetochore COMA complex, which connects centromere-associated proteins and the outer kinetochore. COMA interacts with other inner kinetochore proteins to form the inner kinetochore constitutive centromere-associated network (CCAN), which serves as a structural platform for outer kinetochore assembly. The protein is Inner kinetochore subunit mal2 (mal2) of Schizosaccharomyces pombe (strain 972 / ATCC 24843) (Fission yeast).